Reading from the N-terminus, the 373-residue chain is Chaperone protein DnaJ (373 aa).

The region spanning 5–69 (DYYEVLGVNK…NKRANYDQFG (65 aa)) is the J domain. Residues 130-212 (GTKKEISIKK…CKGKGTENKT (83 aa)) form a CR-type zinc finger. The Zn(2+) site is built by cysteine 143, cysteine 146, cysteine 160, cysteine 163, cysteine 186, cysteine 189, cysteine 200, and cysteine 203. 4 CXXCXGXG motif repeats span residues 143–150 (CHTCNGDG), 160–167 (CSYCNGAG), 186–193 (CPKCEGSG), and 200–207 (CPTCKGKG).

This sequence belongs to the DnaJ family. Homodimer. It depends on Zn(2+) as a cofactor.

The protein localises to the cytoplasm. Participates actively in the response to hyperosmotic and heat shock by preventing the aggregation of stress-denatured proteins and by disaggregating proteins, also in an autonomous, DnaK-independent fashion. Unfolded proteins bind initially to DnaJ; upon interaction with the DnaJ-bound protein, DnaK hydrolyzes its bound ATP, resulting in the formation of a stable complex. GrpE releases ADP from DnaK; ATP binding to DnaK triggers the release of the substrate protein, thus completing the reaction cycle. Several rounds of ATP-dependent interactions between DnaJ, DnaK and GrpE are required for fully efficient folding. Also involved, together with DnaK and GrpE, in the DNA replication of plasmids through activation of initiation proteins. In Staphylococcus epidermidis (strain ATCC 12228 / FDA PCI 1200), this protein is Chaperone protein DnaJ.